A 137-amino-acid chain; its full sequence is Basic phospholipase A2 PeBP(R)-I/II (137 aa).

The signal sequence occupies residues 1–16 (MRTLWIMAVLLLGVEG). 7 disulfide bridges follow: Cys42-Cys131, Cys44-Cys60, Cys59-Cys111, Cys65-Cys137, Cys66-Cys104, Cys73-Cys97, and Cys91-Cys102. The active site involves His63. Asp105 is a catalytic residue.

It belongs to the phospholipase A2 family. Group II subfamily. R49 sub-subfamily. As to expression, expressed by the venom gland.

The protein localises to the secreted. The enzyme catalyses a 1,2-diacyl-sn-glycero-3-phosphocholine + H2O = a 1-acyl-sn-glycero-3-phosphocholine + a fatty acid + H(+). Snake venom phospholipases A2 that have myotoxic, and edema-inducing activity, as well as extremely weak lipolytic activity. PLA2 catalyzes the calcium-dependent hydrolysis of the 2-acyl groups in 3-sn-phosphoglycerides. This chain is Basic phospholipase A2 PeBP(R)-I/II, found in Protobothrops elegans (Elegant pitviper).